The sequence spans 165 residues: Adenine phosphoribosyltransferase (165 aa).

Belongs to the purine/pyrimidine phosphoribosyltransferase family. Homodimer.

It is found in the cytoplasm. The catalysed reaction is AMP + diphosphate = 5-phospho-alpha-D-ribose 1-diphosphate + adenine. It participates in purine metabolism; AMP biosynthesis via salvage pathway; AMP from adenine: step 1/1. In terms of biological role, catalyzes a salvage reaction resulting in the formation of AMP, that is energically less costly than de novo synthesis. The sequence is that of Adenine phosphoribosyltransferase from Bdellovibrio bacteriovorus (strain ATCC 15356 / DSM 50701 / NCIMB 9529 / HD100).